A 334-amino-acid chain; its full sequence is Ornithine carbamoyltransferase subunit F (334 aa).

Carbamoyl phosphate is bound by residues 56 to 59 (STRT), Q83, R107, and 134 to 137 (HPTQ). L-ornithine contacts are provided by residues N168, D232, and 236-237 (SM). Carbamoyl phosphate is bound by residues 274–275 (CL) and R320.

Belongs to the aspartate/ornithine carbamoyltransferase superfamily. OTCase family. In terms of assembly, in E.coli strain K12, trimer of identical or non-identical chains are composed of ArgI (I) and/or ArgF (F). The trimer has the following composition: FFI, FFF, FII, III. E.coli strains B and W, which are known to contain only ArgI, produce only a trimer of identical chains (III).

The protein resides in the cytoplasm. The catalysed reaction is carbamoyl phosphate + L-ornithine = L-citrulline + phosphate + H(+). Its pathway is amino-acid biosynthesis; L-arginine biosynthesis; L-arginine from L-ornithine and carbamoyl phosphate: step 1/3. Reversibly catalyzes the transfer of the carbamoyl group from carbamoyl phosphate (CP) to the N(epsilon) atom of ornithine (ORN) to produce L-citrulline, which is a substrate for argininosuccinate synthetase, the enzyme involved in the final step in arginine biosynthesis. The sequence is that of Ornithine carbamoyltransferase subunit F from Escherichia coli (strain K12).